Consider the following 317-residue polypeptide: Putative AP2/ERF and B3 domain-containing protein Os01g0140700 (317 aa).

Residues 1 to 37 (MEQEAAMVVFSCNSGSGGSSSTTDSKQEEEEEEELAA) form a disordered region. Acidic residues predominate over residues 27 to 37 (QEEEEEEELAA). Positions 66–121 (RYKGVVPQPNGRWGAQIYERHARVWLGTFPDEEAAARAYDVAALRFRGRDAVTNRA) form a DNA-binding region, AP2/ERF. A DNA-binding region (TF-B3) is located at residues 178 to 287 (FEKAVTPSDV…EKHLLIDCKK (110 aa)).

It localises to the nucleus. This chain is Putative AP2/ERF and B3 domain-containing protein Os01g0140700, found in Oryza sativa subsp. japonica (Rice).